Consider the following 359-residue polypeptide: DNA replication and repair protein RecF (359 aa).

Residue 30-37 (GPNGSGKT) participates in ATP binding.

It belongs to the RecF family.

It localises to the cytoplasm. The RecF protein is involved in DNA metabolism; it is required for DNA replication and normal SOS inducibility. RecF binds preferentially to single-stranded, linear DNA. It also seems to bind ATP. The sequence is that of DNA replication and repair protein RecF from Aliivibrio salmonicida (strain LFI1238) (Vibrio salmonicida (strain LFI1238)).